A 217-amino-acid chain; its full sequence is Peptide methionine sulfoxide reductase MsrA 1 (217 aa).

Residue Cys54 is part of the active site.

It belongs to the MsrA Met sulfoxide reductase family.

The enzyme catalyses L-methionyl-[protein] + [thioredoxin]-disulfide + H2O = L-methionyl-(S)-S-oxide-[protein] + [thioredoxin]-dithiol. It carries out the reaction [thioredoxin]-disulfide + L-methionine + H2O = L-methionine (S)-S-oxide + [thioredoxin]-dithiol. Functionally, has an important function as a repair enzyme for proteins that have been inactivated by oxidation. Catalyzes the reversible oxidation-reduction of methionine sulfoxide in proteins to methionine. This chain is Peptide methionine sulfoxide reductase MsrA 1 (msrA1), found in Caulobacter vibrioides (strain ATCC 19089 / CIP 103742 / CB 15) (Caulobacter crescentus).